The sequence spans 214 residues: Cytochrome c biogenesis ATP-binding export protein CcmA (214 aa).

The ABC transporter domain occupies 12 to 214; the sequence is LAARALAFSR…TRMLTLEAAA (203 aa). ATP is bound at residue 44–51; sequence GDNGAGKT.

This sequence belongs to the ABC transporter superfamily. CcmA exporter (TC 3.A.1.107) family. As to quaternary structure, the complex is composed of two ATP-binding proteins (CcmA) and two transmembrane proteins (CcmB).

The protein localises to the cell inner membrane. It carries out the reaction heme b(in) + ATP + H2O = heme b(out) + ADP + phosphate + H(+). In terms of biological role, part of the ABC transporter complex CcmAB involved in the biogenesis of c-type cytochromes; once thought to export heme, this seems not to be the case, but its exact role is uncertain. Responsible for energy coupling to the transport system. The chain is Cytochrome c biogenesis ATP-binding export protein CcmA from Xanthomonas campestris pv. campestris (strain 8004).